The primary structure comprises 592 residues: Aspartate--tRNA ligase (592 aa).

An L-aspartate-binding site is contributed by glutamate 171. The tract at residues 195–198 (QLFK) is aspartate. Arginine 217 is a binding site for L-aspartate. ATP is bound by residues 217 to 219 (RDE) and glutamine 226. Histidine 448 is an L-aspartate binding site. Residue glutamate 482 participates in ATP binding. L-aspartate is bound at residue arginine 489. 534-537 (GLDR) provides a ligand contact to ATP.

It belongs to the class-II aminoacyl-tRNA synthetase family. Type 1 subfamily. As to quaternary structure, homodimer.

It localises to the cytoplasm. It carries out the reaction tRNA(Asp) + L-aspartate + ATP = L-aspartyl-tRNA(Asp) + AMP + diphosphate. Functionally, catalyzes the attachment of L-aspartate to tRNA(Asp) in a two-step reaction: L-aspartate is first activated by ATP to form Asp-AMP and then transferred to the acceptor end of tRNA(Asp). The chain is Aspartate--tRNA ligase from Vibrio vulnificus (strain YJ016).